The following is a 377-amino-acid chain: RIB43A-like with coiled-coils protein 2 (377 aa).

Coiled-coil stretches lie at residues Asn-217–Asp-250 and Glu-282–Asp-308.

Belongs to the RIB43A family. As to quaternary structure, microtubule inner protein component of sperm flagellar doublet microtubules. As to expression, expressed in trachea multiciliated cells.

Its subcellular location is the cytoplasm. It localises to the cytoskeleton. The protein localises to the cilium axoneme. It is found in the flagellum axoneme. Functionally, microtubule inner protein (MIP) part of the dynein-decorated doublet microtubules (DMTs) in cilia axoneme, which is required for motile cilia beating. This Bos taurus (Bovine) protein is RIB43A-like with coiled-coils protein 2.